The following is a 248-amino-acid chain: Triosephosphate isomerase (248 aa).

Positions 11 and 13 each coordinate substrate. Residue histidine 95 is the Electrophile of the active site. Residue glutamate 165 is the Proton acceptor of the active site.

The protein belongs to the triosephosphate isomerase family. Homodimer.

Its subcellular location is the cytoplasm. It catalyses the reaction dihydroxyacetone phosphate = methylglyoxal + phosphate. The enzyme catalyses D-glyceraldehyde 3-phosphate = dihydroxyacetone phosphate. It functions in the pathway carbohydrate degradation; glycolysis; D-glyceraldehyde 3-phosphate from glycerone phosphate: step 1/1. The protein operates within carbohydrate biosynthesis; gluconeogenesis. In terms of biological role, triosephosphate isomerase is an extremely efficient metabolic enzyme that catalyzes the interconversion between dihydroxyacetone phosphate (DHAP) and D-glyceraldehyde-3-phosphate (G3P) in glycolysis and gluconeogenesis. Its function is as follows. It is also responsible for the non-negligible production of methylglyoxal a reactive cytotoxic side-product that modifies and can alter proteins, DNA and lipids. The protein is Triosephosphate isomerase (tpi1) of Xenopus laevis (African clawed frog).